A 307-amino-acid chain; its full sequence is Aspartate carbamoyltransferase catalytic subunit (307 aa).

Carbamoyl phosphate-binding residues include R56 and T57. K84 is a binding site for L-aspartate. Positions 106, 136, and 139 each coordinate carbamoyl phosphate. The L-aspartate site is built by R169 and R221. 2 residues coordinate carbamoyl phosphate: A262 and P263.

It belongs to the aspartate/ornithine carbamoyltransferase superfamily. ATCase family. In terms of assembly, heterododecamer (2C3:3R2) of six catalytic PyrB chains organized as two trimers (C3), and six regulatory PyrI chains organized as three dimers (R2).

It catalyses the reaction carbamoyl phosphate + L-aspartate = N-carbamoyl-L-aspartate + phosphate + H(+). It functions in the pathway pyrimidine metabolism; UMP biosynthesis via de novo pathway; (S)-dihydroorotate from bicarbonate: step 2/3. Functionally, catalyzes the condensation of carbamoyl phosphate and aspartate to form carbamoyl aspartate and inorganic phosphate, the committed step in the de novo pyrimidine nucleotide biosynthesis pathway. This is Aspartate carbamoyltransferase catalytic subunit from Streptococcus pneumoniae (strain 70585).